The sequence spans 360 residues: MARRRMGEEGKGGGWGLNGRQCRFGNRLRAVKGEGWRSAVAAQAATGRREEDDAGGREKGEKRERKGGLSPCLFGKRRRERRRGGRGRREALPPSLGGLRAERRGRGDDDVLINYNVQHVSRIKLEERLLITDKLSLRFLDPIFFGEYPREMREILSSNLPKFTPEEKKLLQNKVDFIGINQYTAIYAKDCIYSPCALNTYEGNALVYTTGVRNGAKIGKPTAFSTYFVVPESIESAVMYVNGRYKDTTIYITENGYSQHSDTNMEDLINDVERVNYLQGYLKYLSSAVRKGANVGGYFMWSLIDNFEWVFGYTIKFGLYHVDFDTQERIPKMSAKWYRDFLTGSNVTDDTQVWSRRADS.

Composition is skewed to basic and acidic residues over residues 1–11 (MARRRMGEEGK) and 47–67 (GRRE…ERKG). 2 disordered regions span residues 1 to 21 (MARR…NGRQ) and 35 to 103 (GWRS…RAER). Over residues 75–86 (GKRRRERRRGGR) the composition is skewed to basic residues. A beta-D-glucoside is bound at residue Tyr183. A disulfide bridge connects residues Cys191 and Cys196. A beta-D-glucoside contacts are provided by residues Glu254, Trp301, 308 to 309 (EW), and Phe317. The Nucleophile role is filled by Glu254. Residue Asn346 is glycosylated (N-linked (GlcNAc...) asparagine).

It belongs to the glycosyl hydrolase 1 family.

It catalyses the reaction Hydrolysis of terminal, non-reducing beta-D-glucosyl residues with release of beta-D-glucose.. The protein is Putative beta-glucosidase 15 (BGLU15) of Oryza sativa subsp. japonica (Rice).